Consider the following 218-residue polypeptide: MGQKVNPVGLRIGIIRDWDSRWYAEKDYADLLHEDLKIREYINKRLQDAAVSRIEIERAANRVNITIHTAKPGMVIGKGGSEVEALRKALTQLTGKRVHINIVEIKKPDLDAKLVAENIARQLENRVSFRRAQKQAIQRAMRAGAKGIKTMVSGRLGGADIARSEHYSEGTVPLHTLRADIDYATAEADTTYGKLGVKVWIYRGEVLPTKKKTEEGGK.

The KH type-2 domain maps to 38-106; the sequence is IREYINKRLQ…RVHINIVEIK (69 aa).

Belongs to the universal ribosomal protein uS3 family. As to quaternary structure, part of the 30S ribosomal subunit. Forms a tight complex with proteins S10 and S14.

Its function is as follows. Binds the lower part of the 30S subunit head. Binds mRNA in the 70S ribosome, positioning it for translation. This Geobacillus sp. (strain WCH70) protein is Small ribosomal subunit protein uS3.